The primary structure comprises 245 residues: Probable octanoyltransferase 2 (245 aa).

The region spanning 38-227 (MEYKPVLYFQ…SIEKEFDIKE (190 aa)) is the BPL/LPL catalytic domain. Substrate is bound by residues 89-96 (RGGYETYH), 157-159 (SIG), and 170-172 (GMA). The active-site Acyl-thioester intermediate is the C188.

The protein belongs to the LipB family.

It localises to the cytoplasm. The enzyme catalyses octanoyl-[ACP] + L-lysyl-[protein] = N(6)-octanoyl-L-lysyl-[protein] + holo-[ACP] + H(+). It functions in the pathway protein modification; protein lipoylation via endogenous pathway; protein N(6)-(lipoyl)lysine from octanoyl-[acyl-carrier-protein]: step 1/2. Its function is as follows. Catalyzes the transfer of endogenously produced octanoic acid from octanoyl-acyl-carrier-protein onto the lipoyl domains of lipoate-dependent enzymes. Lipoyl-ACP can also act as a substrate although octanoyl-ACP is likely to be the physiological substrate. This Picrophilus torridus (strain ATCC 700027 / DSM 9790 / JCM 10055 / NBRC 100828 / KAW 2/3) protein is Probable octanoyltransferase 2.